Consider the following 100-residue polypeptide: Urease subunit gamma (100 aa).

It belongs to the urease gamma subunit family. As to quaternary structure, heterotrimer of UreA (gamma), UreB (beta) and UreC (alpha) subunits. Three heterotrimers associate to form the active enzyme.

It is found in the cytoplasm. It carries out the reaction urea + 2 H2O + H(+) = hydrogencarbonate + 2 NH4(+). Its pathway is nitrogen metabolism; urea degradation; CO(2) and NH(3) from urea (urease route): step 1/1. The protein is Urease subunit gamma of Trichormus variabilis (strain ATCC 29413 / PCC 7937) (Anabaena variabilis).